The sequence spans 927 residues: Band 3 anion transport protein (927 aa).

M1 carries the post-translational modification N-acetylmethionine. Residues 1–420 (MGDMQDHEKV…LSDITDALSP (420 aa)) lie on the Cytoplasmic side of the membrane. Position 18 is a phosphoserine (S18). Phosphotyrosine occurs at positions 31 and 56. The interval 69-303 (SQVYVELQEL…LGRAAATLMT (235 aa)) is globular. An interaction with ANK1 region spans residues 190–199 (AVLTRSGAPS). Residues S199 and S222 each carry the phosphoserine modification. The dimerization arm stretch occupies residues 317–370 (RGELLSSLDSFLDCSLVLPPTEAPSEKALLNLVPVQKELLRKRYLPRPAKPDPN). The tract at residues 367 to 390 (PDPNLYEALDGGKEGPGDEDDPLR) is disordered. Residue Y372 is modified to Phosphotyrosine. The chain crosses the membrane as a helical span at residues 421–444 (QVLAAVIFIYFAALSPAVTFGGLL). The Extracellular segment spans residues 445–452 (GEKTRNLM). Residues 453–473 (GVSELLISTAVQGILFALLGA) traverse the membrane as a helical segment. At 474–476 (QPL) the chain is on the cytoplasmic side. Residues 477–493 (LVLGFSGPLLVFEEAFY) form a discontinuously helical membrane-spanning segment. At 494-502 (SFCESNNLE) the chain is on the extracellular side. Residues 503–523 (YIVGRAWIGFWLILLVVLVVA) form a helical membrane-spanning segment. The Cytoplasmic segment spans residues 524 to 535 (FEGSFLVQYISR). Residues 536–558 (YTQEIFSFLISLIFIYETFSKLI) traverse the membrane as a helical segment. The Extracellular portion of the chain corresponds to 559-586 (KIFQDYPLQESYAPVVMKPKPQGPVPNT). The helical transmembrane segment at 587–607 (ALLSLVLMVGTFLLAMMLRKF) threads the bilayer. Over 608–618 (KNSTYFPGKLR) the chain is Cytoplasmic. A helical membrane pass occupies residues 619–639 (RVIGDFGVPISILIMVLVDTF). Topologically, residues 640–679 (IKNTYTQKLSVPDGLKVSNSSARGWVIHPLGLYNHFPKWM) are extracellular. N-linked (GlcNAc...) asparagine glycosylation is present at N658. The helical transmembrane segment at 680 to 700 (MFASVLPALLVFILIFLESQI) threads the bilayer. At 701–716 (TTLIVSKPERKMIKGS) the chain is on the cytoplasmic side. Residues 717-735 (GFHLDLLLVVGMGGVAALF) form a helical membrane-spanning segment. A discontinuously helical transmembrane segment spans residues 736–753 (GMPWLSATTVRSVTHANA). At 754–776 (LTVMGKASGPGAAAQIQEVKEQR) the chain is on the cytoplasmic side. The next 2 membrane-spanning stretches (helical) occupy residues 777–797 (ISGLLVSVLVGLSILMEPILS) and 798–816 (RIPLAVLFGIFLYMGITSL). The Cytoplasmic segment spans residues 817 to 854 (SGIQLFDRILLLFKPPKYHPDVPFVKRVKTWRMHLFTG). Positions 855 to 885 (IQIICLAVLWVVKSTPASLALPFVLILTVPL) form an intramembrane region, discontinuously helical. C859 carries S-palmitoyl cysteine lipidation. At 886 to 927 (RRLLLPLIFRELELQCLDGDDAKVTFDEAEGLDEYDEVPMPV) the chain is on the cytoplasmic side. At Y920 the chain carries Phosphotyrosine.

The protein belongs to the anion exchanger (TC 2.A.31) family. As to quaternary structure, a dimer in solution, but in its membrane environment, it exists primarily as a mixture of dimers and tetramers and spans the membrane asymmetrically. Component of the ankyrin-1 complex in the erythrocyte, composed of ANK1, RHCE, RHAG, SLC4A1, EPB42, GYPA, GYPB and AQP1. Interacts with STOM; this interaction positively regulates SLC4A1 activity. Interacts with GYPA; a GYPA monomer is bound at each end of the SLC4A1 dimer forming a heterotetramer. Three SLC4A1 dimers (Band 3-I, Band 3-II and Band 3-III) participates in the ankyrin-1 complex. Interacts (via the cytoplasmic domain) with EPB42; this interaction is mediated by the SLC4A1 Band 3-I dimer. Interacts (via the cytoplasmic domain) directly with ANK1; this interaction is mediated by the SLC4A1 Band 3-II and Band 3-III dimers. Interacts with TMEM139. In terms of tissue distribution, kidney.

The protein resides in the cell membrane. It localises to the basolateral cell membrane. It carries out the reaction hydrogencarbonate(in) + chloride(out) = hydrogencarbonate(out) + chloride(in). Functions both as a transporter that mediates electroneutral anion exchange across the cell membrane and as a structural protein. Component of the ankyrin-1 complex of the erythrocyte membrane; required for normal flexibility and stability of the erythrocyte membrane and for normal erythrocyte shape via the interactions of its cytoplasmic domain with cytoskeletal proteins, glycolytic enzymes, and hemoglobin. Functions as a transporter that mediates the 1:1 exchange of inorganic anions across the erythrocyte membrane. Mediates chloride-bicarbonate exchange in the kidney, and is required for normal acidification of the urine. This Rattus norvegicus (Rat) protein is Band 3 anion transport protein.